The following is a 28-amino-acid chain: Cyclotide vodo I3 (28 aa).

3 cysteine pairs are disulfide-bonded: Cys-4/Cys-18, Cys-8/Cys-20, and Cys-13/Cys-25.

In terms of processing, this is a cyclic peptide. Contains 3 disulfide bonds.

Probably participates in a plant defense mechanism. This is Cyclotide vodo I3 from Viola odorata (Sweet violet).